We begin with the raw amino-acid sequence, 432 residues long: Enolase (432 aa).

Q167 contributes to the (2R)-2-phosphoglycerate binding site. The active-site Proton donor is E209. 3 residues coordinate Mg(2+): D246, E287, and D314. Residues K339, R368, S369, and K390 each coordinate (2R)-2-phosphoglycerate. The active-site Proton acceptor is K339.

This sequence belongs to the enolase family. Mg(2+) serves as cofactor.

It localises to the cytoplasm. Its subcellular location is the secreted. The protein localises to the cell surface. It catalyses the reaction (2R)-2-phosphoglycerate = phosphoenolpyruvate + H2O. Its pathway is carbohydrate degradation; glycolysis; pyruvate from D-glyceraldehyde 3-phosphate: step 4/5. In terms of biological role, catalyzes the reversible conversion of 2-phosphoglycerate (2-PG) into phosphoenolpyruvate (PEP). It is essential for the degradation of carbohydrates via glycolysis. The polypeptide is Enolase (Prochlorococcus marinus (strain MIT 9211)).